The primary structure comprises 145 residues: Mannitol-specific phosphotransferase enzyme IIA component (145 aa).

The region spanning 4-144 (PILKKENIVL…EEILSILNEV (141 aa)) is the PTS EIIA type-2 domain. The active-site Tele-phosphohistidine intermediate is the His-64. His-64 carries the post-translational modification Phosphohistidine; by HPr.

The protein resides in the cytoplasm. In terms of biological role, the phosphoenolpyruvate-dependent sugar phosphotransferase system (sugar PTS), a major carbohydrate active transport system, catalyzes the phosphorylation of incoming sugar substrates concomitantly with their translocation across the cell membrane. The enzyme II CmtAB PTS system is involved in D-mannitol transport. The sequence is that of Mannitol-specific phosphotransferase enzyme IIA component from Geobacillus stearothermophilus (Bacillus stearothermophilus).